Here is a 309-residue protein sequence, read N- to C-terminus: Dihydroorotate dehydrogenase B (NAD(+)), catalytic subunit (309 aa).

Residues S21 and 45 to 46 (KA) contribute to the FMN site. Substrate contacts are provided by residues K45 and 69–73 (NAIGL). FMN contacts are provided by N99 and N127. N127 serves as a coordination point for substrate. C130 functions as the Nucleophile in the catalytic mechanism. Positions 165 and 191 each coordinate FMN. Residue 192–193 (NT) coordinates substrate. FMN-binding positions include G217, 243–244 (GG), and 265–266 (GT).

This sequence belongs to the dihydroorotate dehydrogenase family. Type 1 subfamily. Heterotetramer of 2 PyrK and 2 PyrD type B subunits. Requires FMN as cofactor.

Its subcellular location is the cytoplasm. The enzyme catalyses (S)-dihydroorotate + NAD(+) = orotate + NADH + H(+). Its pathway is pyrimidine metabolism; UMP biosynthesis via de novo pathway; orotate from (S)-dihydroorotate (NAD(+) route): step 1/1. In terms of biological role, catalyzes the conversion of dihydroorotate to orotate with NAD(+) as electron acceptor. This Bacillus cereus (strain AH187) protein is Dihydroorotate dehydrogenase B (NAD(+)), catalytic subunit (pyrD).